A 167-amino-acid polypeptide reads, in one-letter code: Large ribosomal subunit protein uL23 (167 aa).

The tract at residues 1 to 130 is large ribosomal subunit protein uL23; the sequence is MNVNEIIKGP…ELEAKNKEIA (130 aa). Disordered stretches follow at residues 91 to 112 and 137 to 167; these read FEDE…TDEK and QAEL…NSAK. 2 stretches are compositionally biased toward basic and acidic residues: residues 97 to 112 and 137 to 157; these read QDQK…TDEK and QAEL…KIEN. The interval 131–167 is unknown; sequence EKLAKKQAELAKKESETNENQEKKIENQTENQENSAK. A compositionally biased stretch (polar residues) spans 158 to 167; it reads QTENQENSAK.

This sequence belongs to the universal ribosomal protein uL23 family. In terms of assembly, part of the 50S ribosomal subunit. Contacts protein L29, and trigger factor when it is bound to the ribosome.

One of the early assembly proteins it binds 23S rRNA. One of the proteins that surrounds the polypeptide exit tunnel on the outside of the ribosome. Forms the main docking site for trigger factor binding to the ribosome. The polypeptide is Large ribosomal subunit protein uL23 (Mesomycoplasma hyopneumoniae (strain 7448) (Mycoplasma hyopneumoniae)).